A 95-amino-acid chain; its full sequence is Large ribosomal subunit protein bL28 (95 aa).

The protein belongs to the bacterial ribosomal protein bL28 family.

The chain is Large ribosomal subunit protein bL28 from Orientia tsutsugamushi (strain Ikeda) (Rickettsia tsutsugamushi).